We begin with the raw amino-acid sequence, 87 residues long: Small ribosomal subunit protein bS20 (87 aa).

It belongs to the bacterial ribosomal protein bS20 family.

Functionally, binds directly to 16S ribosomal RNA. In Clostridium beijerinckii (strain ATCC 51743 / NCIMB 8052) (Clostridium acetobutylicum), this protein is Small ribosomal subunit protein bS20.